Reading from the N-terminus, the 345-residue chain is Dihydroorotate dehydrogenase (quinone) (345 aa).

Residues 65 to 69 and T89 each bind FMN; that span reads AGLDK. K69 provides a ligand contact to substrate. 114-118 contributes to the substrate binding site; it reads NRMGF. N146 and N179 together coordinate FMN. Residue N179 participates in substrate binding. S182 serves as the catalytic Nucleophile. Position 184 (N184) interacts with substrate. FMN is bound by residues K224 and T252. A substrate-binding site is contributed by 253–254; that stretch reads NT. FMN-binding positions include G275, G304, and 325-326; that span reads YT.

It belongs to the dihydroorotate dehydrogenase family. Type 2 subfamily. In terms of assembly, monomer. The cofactor is FMN.

Its subcellular location is the cell membrane. The catalysed reaction is (S)-dihydroorotate + a quinone = orotate + a quinol. The protein operates within pyrimidine metabolism; UMP biosynthesis via de novo pathway; orotate from (S)-dihydroorotate (quinone route): step 1/1. Catalyzes the conversion of dihydroorotate to orotate with quinone as electron acceptor. The chain is Dihydroorotate dehydrogenase (quinone) from Janthinobacterium sp. (strain Marseille) (Minibacterium massiliensis).